The following is a 240-amino-acid chain: Expansin-A20 (240 aa).

Residues 1–21 (MGNILLQLLAVVALCIAPARS) form the signal peptide. The 105-residue stretch at 41–145 (GGACGYGNLY…QQVKCWRYGG (105 aa)) folds into the Expansin-like EG45 domain. Asn107 and Asn207 each carry an N-linked (GlcNAc...) asparagine glycan. The region spanning 155 to 234 (YFELVLVTNM…GWSFGQTFST (80 aa)) is the Expansin-like CBD domain.

It belongs to the expansin family. Expansin A subfamily.

The protein resides in the secreted. Its subcellular location is the cell wall. The protein localises to the membrane. Its function is as follows. May cause loosening and extension of plant cell walls by disrupting non-covalent bonding between cellulose microfibrils and matrix glucans. No enzymatic activity has been found. May be required for rapid internodal elongation in deepwater rice during submergence. The protein is Expansin-A20 (EXPA20) of Oryza sativa subsp. japonica (Rice).